We begin with the raw amino-acid sequence, 64 residues long: Probable tautomerase lp_1712 (64 aa).

P2 functions as the Proton acceptor; via imino nitrogen in the catalytic mechanism.

This sequence belongs to the 4-oxalocrotonate tautomerase family.

This chain is Probable tautomerase lp_1712, found in Lactiplantibacillus plantarum (strain ATCC BAA-793 / NCIMB 8826 / WCFS1) (Lactobacillus plantarum).